The following is a 350-amino-acid chain: S-adenosylmethionine:tRNA ribosyltransferase-isomerase (350 aa).

Belongs to the QueA family. In terms of assembly, monomer.

The protein localises to the cytoplasm. It carries out the reaction 7-aminomethyl-7-carbaguanosine(34) in tRNA + S-adenosyl-L-methionine = epoxyqueuosine(34) in tRNA + adenine + L-methionine + 2 H(+). It participates in tRNA modification; tRNA-queuosine biosynthesis. Transfers and isomerizes the ribose moiety from AdoMet to the 7-aminomethyl group of 7-deazaguanine (preQ1-tRNA) to give epoxyqueuosine (oQ-tRNA). The protein is S-adenosylmethionine:tRNA ribosyltransferase-isomerase of Parvibaculum lavamentivorans (strain DS-1 / DSM 13023 / NCIMB 13966).